Here is a 331-residue protein sequence, read N- to C-terminus: UPF0194 membrane protein YbhG (331 aa).

The first 19 residues, 1–19 (MKKPVVIGLAIAAIVAVIA), serve as a signal peptide directing secretion. Positions 107-208 (EEIAQAAAAV…LDLQDTTLIA (102 aa)) form a coiled coil.

The protein belongs to the UPF0194 family.

Its subcellular location is the periplasm. The chain is UPF0194 membrane protein YbhG from Salmonella heidelberg (strain SL476).